Reading from the N-terminus, the 388-residue chain is MNLHEYQAKALFAEYGLPVSEGFACDTAQEAVEAAGHIGGDMWVVKCQVHAGGRGKAGGVKVTGDKEEIRAFAEHWLGKNLVTYQTDEKGQPVAKILVESCTDIANELYLGAVVDRATRRVVFMASTEGGVEIETVAEETPELIHKAIIDPLTGPQPYQARDLGFKLGLNPTQMKQFTKVFMGLAKMFEDHDFALLEINPLVITDEGNIHCLDGKIGIDGNALFRQPKIRDMHDPSQDDAREAHAAKFELNYVALDGNVGCMVNGAGLAMGTMDIVNLHGGKPANFLDVGGGATKERVAEAFKIILSDSNVKAVLVNIFGGIVRCDMIAEGIIGAVKEVGVEVPVVVRLEGTNANLGRDVLASSGLDIIAAESLTDAAVKVVAAAEGK.

The ATP-grasp domain maps to 9 to 244 (KALFAEYGLP…PSQDDAREAH (236 aa)). ATP is bound by residues lysine 46, 53-55 (GRG), glutamate 99, threonine 102, and glutamate 107. 2 residues coordinate Mg(2+): asparagine 199 and aspartate 213. Residues asparagine 264 and 321–323 (GIV) each bind substrate.

The protein belongs to the succinate/malate CoA ligase beta subunit family. As to quaternary structure, heterotetramer of two alpha and two beta subunits. The cofactor is Mg(2+).

It carries out the reaction succinate + ATP + CoA = succinyl-CoA + ADP + phosphate. It catalyses the reaction GTP + succinate + CoA = succinyl-CoA + GDP + phosphate. Its pathway is carbohydrate metabolism; tricarboxylic acid cycle; succinate from succinyl-CoA (ligase route): step 1/1. In terms of biological role, succinyl-CoA synthetase functions in the citric acid cycle (TCA), coupling the hydrolysis of succinyl-CoA to the synthesis of either ATP or GTP and thus represents the only step of substrate-level phosphorylation in the TCA. The beta subunit provides nucleotide specificity of the enzyme and binds the substrate succinate, while the binding sites for coenzyme A and phosphate are found in the alpha subunit. The polypeptide is Succinate--CoA ligase [ADP-forming] subunit beta (Shewanella halifaxensis (strain HAW-EB4)).